Consider the following 294-residue polypeptide: Nucleotide-binding protein CA_C0511 (294 aa).

ATP is bound at residue 8–15 (GLSGAGKT). Position 59–62 (59–62 (DIRG)) interacts with GTP.

It belongs to the RapZ-like family.

Displays ATPase and GTPase activities. This is Nucleotide-binding protein CA_C0511 from Clostridium acetobutylicum (strain ATCC 824 / DSM 792 / JCM 1419 / IAM 19013 / LMG 5710 / NBRC 13948 / NRRL B-527 / VKM B-1787 / 2291 / W).